The following is a 184-amino-acid chain: tRNA (cytidine(56)-2'-O)-methyltransferase (184 aa).

S-adenosyl-L-methionine-binding positions include Leu87, 112–116, and 130–137; these read GAEKV and VANQPHSE.

This sequence belongs to the aTrm56 family. As to quaternary structure, homodimer.

Its subcellular location is the cytoplasm. The catalysed reaction is cytidine(56) in tRNA + S-adenosyl-L-methionine = 2'-O-methylcytidine(56) in tRNA + S-adenosyl-L-homocysteine + H(+). Its function is as follows. Specifically catalyzes the AdoMet-dependent 2'-O-ribose methylation of cytidine at position 56 in tRNAs. This is tRNA (cytidine(56)-2'-O)-methyltransferase from Methanocorpusculum labreanum (strain ATCC 43576 / DSM 4855 / Z).